Here is a 902-residue protein sequence, read N- to C-terminus: Gamma-tubulin complex component 2 (902 aa).

Tyr83 carries the phosphotyrosine modification. A disordered region spans residues 875-902; the sequence is ERSQKAAPQVPVLRGPPAPAPRVAVTAQ.

This sequence belongs to the TUBGCP family. In terms of assembly, component of the gamma-tubulin ring complex (gTuRC) consisting of TUBGCP2, TUBGCP3, TUBGCP4, TUBGCP5 and TUBGCP6 and gamma-tubulin TUBG1 or TUBG2. TUBGCP2, TUBGCP3, TUBGCP4, TUBGCP5 and TUBGCP6 assemble in a 5:5:2:1:1 stoichiometry; each is associated with a gamma-tubulin, thereby arranging 14 gamma-tubulins in a helical manner. Gamma-tubulin at the first position is blocked by TUBGCP3 at the last position, allowing 13 protafilaments to grow into a microtubule. The gTuRC (via TUBGCP3 and TUBGCP6) interacts with ACTB and MZT1; the interactions form a luminal bridge that stabilizes the initial structure during complex assembly. The gTuRC (via TUBGCP2) interacts with MZT2A/MZT2B and CDK5RAP2 (via CM1 motif); the interactions play a role in gTuRC activation. Interacts with ATF5; the ATF5:PCNT:polyglutamylated tubulin (PGT) tripartite unites the mother centriole and the pericentriolar material (PCM) in the centrosome.

It localises to the cytoplasm. The protein localises to the cytoskeleton. It is found in the microtubule organizing center. Its subcellular location is the centrosome. In terms of biological role, component of the gamma-tubulin ring complex (gTuRC) which mediates microtubule nucleation. The gTuRC regulates the minus-end nucleation of alpha-beta tubulin heterodimers that grow into microtubule protafilaments, a critical step in centrosome duplication and spindle formation. Plays a role in neuronal migration. The sequence is that of Gamma-tubulin complex component 2 (TUBGCP2) from Pongo abelii (Sumatran orangutan).